The chain runs to 205 residues: Methylthioribulose-1-phosphate dehydratase (205 aa).

Residues histidine 98 and histidine 100 each coordinate Zn(2+).

It belongs to the aldolase class II family. MtnB subfamily. Zn(2+) is required as a cofactor.

The catalysed reaction is 5-(methylsulfanyl)-D-ribulose 1-phosphate = 5-methylsulfanyl-2,3-dioxopentyl phosphate + H2O. Its pathway is amino-acid biosynthesis; L-methionine biosynthesis via salvage pathway; L-methionine from S-methyl-5-thio-alpha-D-ribose 1-phosphate: step 2/6. In terms of biological role, catalyzes the dehydration of methylthioribulose-1-phosphate (MTRu-1-P) into 2,3-diketo-5-methylthiopentyl-1-phosphate (DK-MTP-1-P). The sequence is that of Methylthioribulose-1-phosphate dehydratase from Gluconacetobacter diazotrophicus (strain ATCC 49037 / DSM 5601 / CCUG 37298 / CIP 103539 / LMG 7603 / PAl5).